A 234-amino-acid chain; its full sequence is MRLVQLSRHSIAFPSPEGALREPNGLLALGGDLSPARLLMAYQRGIFPWFSPGDPILWWSPDPRAVLWPEQFHLSRSMKRFHQRSPYRVTLNHAFGEVIEGCASDRDEGTWITSSIVRAYHQLHELGHAHSIEVWQENTLVGGMYGVAQGALFCGESMFSRAENASKTALLVFCQAFTQSGGKLIDCQVLNNHTASLGAVDIPRRDYLDYLSVLRGYRLPELFWVPRVLFPGAQ.

Belongs to the L/F-transferase family.

It is found in the cytoplasm. The catalysed reaction is N-terminal L-lysyl-[protein] + L-leucyl-tRNA(Leu) = N-terminal L-leucyl-L-lysyl-[protein] + tRNA(Leu) + H(+). The enzyme catalyses N-terminal L-arginyl-[protein] + L-leucyl-tRNA(Leu) = N-terminal L-leucyl-L-arginyl-[protein] + tRNA(Leu) + H(+). It carries out the reaction L-phenylalanyl-tRNA(Phe) + an N-terminal L-alpha-aminoacyl-[protein] = an N-terminal L-phenylalanyl-L-alpha-aminoacyl-[protein] + tRNA(Phe). Its function is as follows. Functions in the N-end rule pathway of protein degradation where it conjugates Leu, Phe and, less efficiently, Met from aminoacyl-tRNAs to the N-termini of proteins containing an N-terminal arginine or lysine. The polypeptide is Leucyl/phenylalanyl-tRNA--protein transferase (Klebsiella pneumoniae (strain 342)).